The primary structure comprises 258 residues: Serine protease VLSP-3 (258 aa).

The first 18 residues, 1–18, serve as a signal peptide directing secretion; it reads MVLIRVLANLLVLQLSYA. The propeptide occupies 19 to 24; it reads QKSSEL. Positions 25-249 constitute a Peptidase S1 domain; the sequence is VIGGDECNIN…YTDWIQSIIA (225 aa). Intrachain disulfides connect Cys-31–Cys-163, Cys-50–Cys-66, Cys-98–Cys-256, Cys-142–Cys-210, Cys-174–Cys-189, and Cys-200–Cys-225. Asn-44 carries an N-linked (GlcNAc...) asparagine glycan. Residue His-65 is the Charge relay system of the active site. N-linked (GlcNAc...) asparagine glycans are attached at residues Asn-79 and Asn-103. Residue Asp-110 is the Charge relay system of the active site. N-linked (GlcNAc...) asparagine glycosylation is found at Asn-154 and Asn-170. Ser-204 functions as the Charge relay system in the catalytic mechanism. A glycan (N-linked (GlcNAc...) asparagine) is linked at Asn-251.

Belongs to the peptidase S1 family. Snake venom subfamily. As to quaternary structure, monomer. As to expression, expressed by the venom gland.

It is found in the secreted. Functionally, snake venom serine protease that may act in the hemostasis system of the prey. The protein is Serine protease VLSP-3 of Macrovipera lebetinus (Levantine viper).